Here is a 216-residue protein sequence, read N- to C-terminus: MIITIDGPSGTGKSTLAKALAQTLQFLYCNTGAMYRTLAYARLQPDWQEVPLEDFLASPPFSFSFSKDSPLQAFYGDRLLTSELSSQEVANFASLFSKEPLVRAYMQTLQKQYATVGNCVFEGRDMGSKVFPHAEVKIFLTAKPEIRAERRLKDLPQGSLSKEALMAELIARDQADQQRECDPLVIPQDATVIDSSDLTISQILEKILPLIPSHLT.

7–15 (GPSGTGKST) lines the ATP pocket.

The protein belongs to the cytidylate kinase family. Type 1 subfamily.

Its subcellular location is the cytoplasm. It carries out the reaction CMP + ATP = CDP + ADP. It catalyses the reaction dCMP + ATP = dCDP + ADP. The polypeptide is Cytidylate kinase (Chlamydia trachomatis serovar D (strain ATCC VR-885 / DSM 19411 / UW-3/Cx)).